We begin with the raw amino-acid sequence, 252 residues long: Large ribosomal subunit protein uL4 (252 aa).

Belongs to the universal ribosomal protein uL4 family. In terms of assembly, part of the 50S ribosomal subunit.

Functionally, one of the primary rRNA binding proteins, this protein initially binds near the 5'-end of the 23S rRNA. It is important during the early stages of 50S assembly. It makes multiple contacts with different domains of the 23S rRNA in the assembled 50S subunit and ribosome. Its function is as follows. Forms part of the polypeptide exit tunnel. In Methanococcus aeolicus (strain ATCC BAA-1280 / DSM 17508 / OCM 812 / Nankai-3), this protein is Large ribosomal subunit protein uL4.